The following is a 90-amino-acid chain: Acylphosphatase (90 aa).

Residues 3-90 form the Acylphosphatase-like domain; the sequence is QKLFIVTGHV…EQFEHFEIRR (88 aa). Catalysis depends on residues arginine 18 and asparagine 36.

The protein belongs to the acylphosphatase family.

The catalysed reaction is an acyl phosphate + H2O = a carboxylate + phosphate + H(+). The chain is Acylphosphatase (acyP) from Actinobacillus pleuropneumoniae serotype 5b (strain L20).